Reading from the N-terminus, the 197-residue chain is Potassium-transporting ATPase KdpC subunit (197 aa).

The chain crosses the membrane as a helical span at residues Pro-7 to Val-27.

The protein belongs to the KdpC family. As to quaternary structure, the system is composed of three essential subunits: KdpA, KdpB and KdpC.

The protein resides in the cell inner membrane. Part of the high-affinity ATP-driven potassium transport (or Kdp) system, which catalyzes the hydrolysis of ATP coupled with the electrogenic transport of potassium into the cytoplasm. This subunit acts as a catalytic chaperone that increases the ATP-binding affinity of the ATP-hydrolyzing subunit KdpB by the formation of a transient KdpB/KdpC/ATP ternary complex. In Beijerinckia indica subsp. indica (strain ATCC 9039 / DSM 1715 / NCIMB 8712), this protein is Potassium-transporting ATPase KdpC subunit.